Here is a 62-residue protein sequence, read N- to C-terminus: UPF0291 protein CLD_1956 (62 aa).

Belongs to the UPF0291 family.

The protein localises to the cytoplasm. The polypeptide is UPF0291 protein CLD_1956 (Clostridium botulinum (strain Okra / Type B1)).